We begin with the raw amino-acid sequence, 323 residues long: UDP-galactose/UDP-glucose transporter 7 (323 aa).

Topologically, residues Met-1 to Thr-10 are cytoplasmic. The chain crosses the membrane as a helical span at residues Ser-11–Ile-31. Residues Asn-32–Val-35 lie on the Lumenal side of the membrane. Residues Ile-36–His-58 form a helical membrane-spanning segment. Residues Phe-59–Lys-78 lie on the Cytoplasmic side of the membrane. Residues Leu-79 to Leu-97 form a helical membrane-spanning segment. Residues Lys-98–Asn-101 lie on the Lumenal side of the membrane. A helical transmembrane segment spans residues Ile-102–Gly-124. Topologically, residues Lys-125–Val-132 are cytoplasmic. A helical membrane pass occupies residues Ala-133–Phe-153. Asp-154 is a topological domain (lumenal). Residues Leu-155–Val-175 form a helical membrane-spanning segment. Topologically, residues Glu-176 to Ser-186 are cytoplasmic. Residues Ile-187–Val-207 form a helical membrane-spanning segment. Over Thr-208–Pro-226 the chain is Lumenal. The chain crosses the membrane as a helical span at residues Phe-227–Leu-247. At Cys-248–Asn-252 the chain is on the cytoplasmic side. A helical membrane pass occupies residues Ser-253–Leu-275. Topologically, residues Leu-276–Gly-278 are lumenal. Residues Val-279–Tyr-301 traverse the membrane as a helical segment. At Ala-302 to Lys-323 the chain is on the cytoplasmic side.

This sequence belongs to the TPT transporter family. UGnT (TC 2.A.7.15) subfamily. Widely expressed with highest expression in roots.

The protein resides in the golgi apparatus membrane. Nucleotide-sugar transporter that transports UDP-glucose and UDP-galactose. Plays a role in lateral root and root hair development. The sequence is that of UDP-galactose/UDP-glucose transporter 7 from Arabidopsis thaliana (Mouse-ear cress).